We begin with the raw amino-acid sequence, 696 residues long: Elongation factor G (696 aa).

A tr-type G domain is found at 8–286; that stretch reads EDVRNIGIAA…AVVAYLPAPT (279 aa). GTP is bound by residues 17–24, 81–85, and 135–138; these read AHIDAGKT, DTPGH, and NKMD.

Belongs to the TRAFAC class translation factor GTPase superfamily. Classic translation factor GTPase family. EF-G/EF-2 subfamily.

The protein localises to the cytoplasm. Its function is as follows. Catalyzes the GTP-dependent ribosomal translocation step during translation elongation. During this step, the ribosome changes from the pre-translocational (PRE) to the post-translocational (POST) state as the newly formed A-site-bound peptidyl-tRNA and P-site-bound deacylated tRNA move to the P and E sites, respectively. Catalyzes the coordinated movement of the two tRNA molecules, the mRNA and conformational changes in the ribosome. The protein is Elongation factor G of Sulfurimonas denitrificans (strain ATCC 33889 / DSM 1251) (Thiomicrospira denitrificans (strain ATCC 33889 / DSM 1251)).